A 1158-amino-acid chain; its full sequence is ATP-dependent helicase/deoxyribonuclease subunit B (1158 aa).

Belongs to the helicase family. AddB/RexB type 2 subfamily. Heterodimer of AddA and RexB. Requires Mg(2+) as cofactor.

Functionally, the heterodimer acts as both an ATP-dependent DNA helicase and an ATP-dependent, dual-direction single-stranded exonuclease. Recognizes the chi site generating a DNA molecule suitable for the initiation of homologous recombination. This subunit has 5' -&gt; 3' nuclease activity but not helicase activity. This chain is ATP-dependent helicase/deoxyribonuclease subunit B, found in Lactobacillus johnsonii (strain CNCM I-12250 / La1 / NCC 533).